Reading from the N-terminus, the 84-residue chain is Large ribosomal subunit protein eL34 (84 aa).

The protein belongs to the eukaryotic ribosomal protein eL34 family.

This is Large ribosomal subunit protein eL34 (ribL34e) from Pyrobaculum aerophilum (strain ATCC 51768 / DSM 7523 / JCM 9630 / CIP 104966 / NBRC 100827 / IM2).